We begin with the raw amino-acid sequence, 269 residues long: Rhamnulose-1-phosphate aldolase (269 aa).

The active site involves Glu-119. The Zn(2+) site is built by His-142, His-144, and His-214.

This sequence belongs to the aldolase class II family. RhaD subfamily. Zn(2+) is required as a cofactor.

Its subcellular location is the cytoplasm. The enzyme catalyses L-rhamnulose 1-phosphate = (S)-lactaldehyde + dihydroxyacetone phosphate. Its pathway is carbohydrate degradation; L-rhamnose degradation; glycerone phosphate from L-rhamnose: step 3/3. In terms of biological role, catalyzes the reversible cleavage of L-rhamnulose-1-phosphate to dihydroxyacetone phosphate (DHAP) and L-lactaldehyde. This Bacteroides thetaiotaomicron (strain ATCC 29148 / DSM 2079 / JCM 5827 / CCUG 10774 / NCTC 10582 / VPI-5482 / E50) protein is Rhamnulose-1-phosphate aldolase.